Consider the following 936-residue polypeptide: Calcium homeostasis endoplasmic reticulum protein (936 aa).

Methionine 1 carries the N-acetylmethionine modification. An SURP motif repeat occupies 15–57; sequence VIDKLAQFVARNGPEFEKMTMEKQKDNPKFSFLFGGEFYSYYK. Residue lysine 18 is modified to N6-acetyllysine. A disordered region spans residues 77 to 102; it reads EPTSAMPPLPQPPLAPTASLTPAQGT. Pro residues predominate over residues 81-91; it reads AMPPLPQPPLA. The region spanning 149–289 is the CID domain; that stretch reads ETQLDMSEFD…QLQSPALGLG (141 aa). Positions 328–646 are disordered; it reads LAQQQQQQQQ…RQGPPHINHD (319 aa). The span at 330–355 shows a compositional bias: low complexity; sequence QQQQQQQQQQQQQPQPQPQPQIQLPQ. The segment covering 363–383 has biased composition (pro residues); it reads TPPPPAPPPASAPAPTIPPTT. The span at 395-405 shows a compositional bias: polar residues; it reads PGSSEYDTSAG. The span at 488–500 shows a compositional bias: low complexity; sequence PWNNQPDPNWNNQ. A compositionally biased stretch (pro residues) spans 534–550; the sequence is PFPPHQQHPQFNQPPHP. A compositionally biased stretch (low complexity) spans 551–560; sequence HNFNRFPPRF. Basic and acidic residues predominate over residues 561-572; the sequence is MQDDFPPRHPFE. Residues 594-603 show a composition bias toward basic residues; sequence PHHHPGHRMP. Tyrosine 723 is modified (phosphotyrosine). The disordered stretch occupies residues 731–887; it reads RARRRKGQEK…DPIKGGDVRD (157 aa). The segment covering 748–758 has biased composition (basic residues); the sequence is SRSRSKSRGRS. The segment covering 759–773 has biased composition (low complexity); sequence SSRSSSRSSKSSRSS. The span at 774–824 shows a compositional bias: basic residues; it reads SRSHSRSRSRSSSRSRSRSRSRSRSSRSRSRSRSRSRSKSYSPGRRRRSRS. Residues serine 822, serine 824, and serine 826 each carry the phosphoserine modification. Threonine 828 carries the post-translational modification Phosphothreonine. Residue serine 837 is modified to Phosphoserine. The G-patch domain maps to 850–900; the sequence is EENKGHQMLVKMGWSGSGGLGAKEQGIQDPIKGGDVRDKWDQYKGVGVALD. A Glycyl lysine isopeptide (Lys-Gly) (interchain with G-Cter in SUMO2) cross-link involves residue lysine 853. Residues serine 864 and serine 866 each carry the phosphoserine modification. Lysine 881 participates in a covalent cross-link: Glycyl lysine isopeptide (Lys-Gly) (interchain with G-Cter in SUMO2). Residue lysine 888 is modified to N6-acetyllysine. Serine 913 is subject to Phosphoserine.

It is found in the cytoplasm. Its subcellular location is the perinuclear region. The protein resides in the endoplasmic reticulum. In terms of biological role, involved in calcium homeostasis, growth and proliferation. The sequence is that of Calcium homeostasis endoplasmic reticulum protein from Mus musculus (Mouse).